The sequence spans 1039 residues: Potassium-transporting ATPase alpha chain 2 (1039 aa).

Topologically, residues 1-102 (MHQKTPEIYS…NSLTPPKQTP (102 aa)) are cytoplasmic. The helical transmembrane segment at 103–123 (EIVKFLKQMVGGFSILLWVGA) threads the bilayer. Topologically, residues 124–146 (FLCWIAYGIQYSSDKSASLNNVY) are lumenal. A helical transmembrane segment spans residues 147–167 (LGCVLGLVVILTGIFAYYQEA). Residues 168 to 303 (KSTNIMSSFN…NEKTPIAIEI (136 aa)) are Cytoplasmic-facing. A helical transmembrane segment spans residues 304–323 (EHFVHIVAGVAVSIGILFFI). Topologically, residues 324–335 (IAVSLKYQVLDS) are lumenal. Residues 336-353 (IIFLIGIIVANVPEGLLA) traverse the membrane as a helical segment. Residues 354–787 (TVTVTLSLTA…EEGRLIFDNL (434 aa)) lie on the Cytoplasmic side of the membrane. Catalysis depends on aspartate 391, which acts as the 4-aspartylphosphate intermediate. Residues aspartate 732 and aspartate 736 each coordinate Mg(2+). Residues 788-807 (KKTIAYSLTKNIAELCPFLI) form a helical membrane-spanning segment. The Lumenal portion of the chain corresponds to 808–817 (YIIVGLPLPI). Residues 818 to 838 (GTITILFIDLGTDIIPSIALA) traverse the membrane as a helical segment. The Cytoplasmic segment spans residues 839–858 (YEKAESDIMNRKPRHKNKDR). The helical transmembrane segment at 859–881 (LVNQPLAVYSYLHIGLMQALGAF) threads the bilayer. At 882 to 933 (LVYFTVYAQEGFLPRTLINLRVEWEKDYVNDLKDSYGQEWTRYQREYLEWTG) the chain is on the lumenal side. Residues 934-953 (YTAFFVGILVQQIADLIIRK) traverse the membrane as a helical segment. Residues 954-967 (TRRNSIFQQGLFRN) lie on the Cytoplasmic side of the membrane. Serine 958 is modified (phosphoserine; by PKA). Residues 968–986 (KVIWVGITSQIIIGLILSY) traverse the membrane as a helical segment. The Lumenal portion of the chain corresponds to 987-1001 (GLGSVTALSFTMLRA). Residues 1002–1022 (QYWFVAVPHAILIWVYDEVRK) traverse the membrane as a helical segment. Over 1023 to 1039 (LFIRLYPGSWWDKNMYY) the chain is Cytoplasmic.

This sequence belongs to the cation transport ATPase (P-type) (TC 3.A.3) family. Type IIC subfamily. In terms of assembly, the ATPase pump is composed of a catalytic alpha subunit and an auxiliary non-catalytic beta subunit. The alpha subunit pairs with the beta subunit of gastric H(+)/K(+) ATPase ATP4B or the beta subunit of Na(+)/K(+) ATPases ATP1B1 and ATP1B3; this interaction is required for the formation of a functionally active pump and its targeting at the plasma membrane. As to expression, expressed in airway epithelial cells (at protein level). Found in skin and kidney. Detected in prostate basal cells (at protein level). Expression is increased in benign prostate hyperplasia and tumor tissues (at protein level).

It localises to the apical cell membrane. It catalyses the reaction K(+)(out) + ATP + H2O + H(+)(in) = K(+)(in) + ADP + phosphate + 2 H(+)(out). It carries out the reaction K(+)(out) + Na(+)(in) + ATP + H2O = K(+)(in) + Na(+)(out) + ADP + phosphate + H(+). Its activity is regulated as follows. The ATPase activity is regulated by monovalent cations and pH. Up-regulated by K(+) ions in a dose-dependent way. Down-regulated by Na(+) ions. Inhibited by Na(+)/K(+)-ATPase inhibitor ouabain and H(+)/K(+)-ATPase inhibitor SCH-28080 with an intermediate sensitivity to completely resistant Na(+)/K(+)-ATPases and highly sensitive H(+)/K(+)-ATPases. In terms of biological role, the catalytic subunit of a H(+)/K(+) ATPase and/or Na(+)/K(+) ATPase pump which transports K(+) ions in exchange for Na(+) and/or H(+) ions across the apical membrane of epithelial cells. Uses ATP as an energy source to pump K(+) ions into the cell while transporting Na(+) and/or H(+) ions to the extracellular compartment. Involved in the maintenance of electrolyte homeostasis through K(+) ion absorption in kidney and colon. In the airway epithelium, may play a primary role in mucus acidification regulating its viscosity and clearance. In Homo sapiens (Human), this protein is Potassium-transporting ATPase alpha chain 2.